A 160-amino-acid chain; its full sequence is Probable dihydroneopterin aldolase 3 (160 aa).

Residues E59, F91, and 110–111 (YE) contribute to the substrate site. K137 serves as the catalytic Proton donor/acceptor.

This sequence belongs to the DHNA family. As to quaternary structure, homooctamer. Forms a hollow cylinder assembled from two ring-shaped tetramers. In terms of tissue distribution, expressed at very low levels in siliques.

The enzyme catalyses 7,8-dihydroneopterin = 6-hydroxymethyl-7,8-dihydropterin + glycolaldehyde. It participates in cofactor biosynthesis; tetrahydrofolate biosynthesis; 2-amino-4-hydroxy-6-hydroxymethyl-7,8-dihydropteridine diphosphate from 7,8-dihydroneopterin triphosphate: step 3/4. Functionally, catalyzes the conversion of 7,8-dihydroneopterin into 6-hydroxymethyl-7,8-dihydropterin, a biosynthetic precursor of the vitamin tetrahydrofolate. Can use L-threo-dihydroneopterin and D-erythro-dihydroneopterin as substrates for the formation of 6-hydroxymethyldihydropterin, but it can also catalyze the epimerization of carbon 2' of dihydroneopterin and dihydromonapterin. This is Probable dihydroneopterin aldolase 3 from Arabidopsis thaliana (Mouse-ear cress).